The sequence spans 226 residues: Cytochrome c oxidase subunit 2 (226 aa).

The Mitochondrial intermembrane segment spans residues 1–14 (MAYPLQLGLQDATS). The helical transmembrane segment at 15 to 45 (PIMEELTSFHDHTLMIVFLISTLVLYIISLM) threads the bilayer. Topologically, residues 46–59 (LTTKLTHTSTMDAQ) are mitochondrial matrix. Residues 60–87 (EIETIWTILPAIILIMIALPSLRVLYMM) traverse the membrane as a helical segment. The Mitochondrial intermembrane portion of the chain corresponds to 88–226 (DEINNPALTV…KYFEAWSASM (139 aa)). Cu cation is bound by residues H161, C196, E198, C200, H204, and M207. E198 contacts Mg(2+). Residue Y218 is modified to Phosphotyrosine.

This sequence belongs to the cytochrome c oxidase subunit 2 family. In terms of assembly, component of the cytochrome c oxidase (complex IV, CIV), a multisubunit enzyme composed of 14 subunits. The complex is composed of a catalytic core of 3 subunits MT-CO1, MT-CO2 and MT-CO3, encoded in the mitochondrial DNA, and 11 supernumerary subunits COX4I, COX5A, COX5B, COX6A, COX6B, COX6C, COX7A, COX7B, COX7C, COX8 and NDUFA4, which are encoded in the nuclear genome. The complex exists as a monomer or a dimer and forms supercomplexes (SCs) in the inner mitochondrial membrane with NADH-ubiquinone oxidoreductase (complex I, CI) and ubiquinol-cytochrome c oxidoreductase (cytochrome b-c1 complex, complex III, CIII), resulting in different assemblies (supercomplex SCI(1)III(2)IV(1) and megacomplex MCI(2)III(2)IV(2)). Found in a complex with TMEM177, COA6, COX18, COX20, SCO1 and SCO2. Interacts with TMEM177 in a COX20-dependent manner. Interacts with COX20. Interacts with COX16. Cu cation serves as cofactor.

It is found in the mitochondrion inner membrane. It catalyses the reaction 4 Fe(II)-[cytochrome c] + O2 + 8 H(+)(in) = 4 Fe(III)-[cytochrome c] + 2 H2O + 4 H(+)(out). Component of the cytochrome c oxidase, the last enzyme in the mitochondrial electron transport chain which drives oxidative phosphorylation. The respiratory chain contains 3 multisubunit complexes succinate dehydrogenase (complex II, CII), ubiquinol-cytochrome c oxidoreductase (cytochrome b-c1 complex, complex III, CIII) and cytochrome c oxidase (complex IV, CIV), that cooperate to transfer electrons derived from NADH and succinate to molecular oxygen, creating an electrochemical gradient over the inner membrane that drives transmembrane transport and the ATP synthase. Cytochrome c oxidase is the component of the respiratory chain that catalyzes the reduction of oxygen to water. Electrons originating from reduced cytochrome c in the intermembrane space (IMS) are transferred via the dinuclear copper A center (CU(A)) of subunit 2 and heme A of subunit 1 to the active site in subunit 1, a binuclear center (BNC) formed by heme A3 and copper B (CU(B)). The BNC reduces molecular oxygen to 2 water molecules using 4 electrons from cytochrome c in the IMS and 4 protons from the mitochondrial matrix. This chain is Cytochrome c oxidase subunit 2 (MT-CO2), found in Perognathus flavus (Silky pocket mouse).